A 347-amino-acid polypeptide reads, in one-letter code: Holliday junction branch migration complex subunit RuvB (347 aa).

The interval 1 to 183 (MTDVPRMVTP…FGIPVRLNFY (183 aa)) is large ATPase domain (RuvB-L). ATP-binding positions include leucine 22, arginine 23, glycine 64, lysine 67, threonine 68, threonine 69, 130–132 (EDF), arginine 173, tyrosine 183, and arginine 220. Position 68 (threonine 68) interacts with Mg(2+). The interval 184-254 (TVDELEKIVS…IADHALGALE (71 aa)) is small ATPAse domain (RuvB-S). Residues 257-347 (AAGLDAMDRR…QFGLFGGEDE (91 aa)) are head domain (RuvB-H). Arginine 293, arginine 312, and arginine 317 together coordinate DNA.

Belongs to the RuvB family. Homohexamer. Forms an RuvA(8)-RuvB(12)-Holliday junction (HJ) complex. HJ DNA is sandwiched between 2 RuvA tetramers; dsDNA enters through RuvA and exits via RuvB. An RuvB hexamer assembles on each DNA strand where it exits the tetramer. Each RuvB hexamer is contacted by two RuvA subunits (via domain III) on 2 adjacent RuvB subunits; this complex drives branch migration. In the full resolvosome a probable DNA-RuvA(4)-RuvB(12)-RuvC(2) complex forms which resolves the HJ.

It localises to the cytoplasm. The catalysed reaction is ATP + H2O = ADP + phosphate + H(+). The RuvA-RuvB-RuvC complex processes Holliday junction (HJ) DNA during genetic recombination and DNA repair, while the RuvA-RuvB complex plays an important role in the rescue of blocked DNA replication forks via replication fork reversal (RFR). RuvA specifically binds to HJ cruciform DNA, conferring on it an open structure. The RuvB hexamer acts as an ATP-dependent pump, pulling dsDNA into and through the RuvAB complex. RuvB forms 2 homohexamers on either side of HJ DNA bound by 1 or 2 RuvA tetramers; 4 subunits per hexamer contact DNA at a time. Coordinated motions by a converter formed by DNA-disengaged RuvB subunits stimulates ATP hydrolysis and nucleotide exchange. Immobilization of the converter enables RuvB to convert the ATP-contained energy into a lever motion, pulling 2 nucleotides of DNA out of the RuvA tetramer per ATP hydrolyzed, thus driving DNA branch migration. The RuvB motors rotate together with the DNA substrate, which together with the progressing nucleotide cycle form the mechanistic basis for DNA recombination by continuous HJ branch migration. Branch migration allows RuvC to scan DNA until it finds its consensus sequence, where it cleaves and resolves cruciform DNA. The sequence is that of Holliday junction branch migration complex subunit RuvB from Nitrobacter hamburgensis (strain DSM 10229 / NCIMB 13809 / X14).